A 284-amino-acid polypeptide reads, in one-letter code: P2R1A-PPP2R2A-interacting phosphatase regulator 1 (284 aa).

Disordered regions lie at residues 1–32 (MAQEKMELDLELPPGSAAAPSDGGGLRRSNSA), 112–198 (EESL…PIKR), and 235–284 (AHTL…LPID). 2 stretches are compositionally biased toward low complexity: residues 152–164 (SPSLQSLVSSSGL) and 172–184 (PTRRFSSRRSQSP). The span at 258 to 269 (STGSPVSLSDSR) shows a compositional bias: polar residues.

It belongs to the FAM122 family.

Its subcellular location is the nucleus. The protein resides in the cytoplasm. Its function is as follows. Acts as an inhibitor of serine/threonine-protein phosphatase 2A (PP2A) activity. Potentiates ubiquitin-mediated proteasomal degradation of serine/threonine-protein phosphatase 2A catalytic subunit alpha (PPP2CA). Inhibits PP2A-mediated dephosphorylation of WEE1, promoting ubiquitin-mediated proteolysis of WEE1, thereby releasing G2/M checkpoint. This chain is P2R1A-PPP2R2A-interacting phosphatase regulator 1, found in Gallus gallus (Chicken).